Reading from the N-terminus, the 644-residue chain is Biosynthetic arginine decarboxylase (644 aa).

Position 113 is an N6-(pyridoxal phosphate)lysine (K113). 293 to 303 (FDVGGGLGVDY) provides a ligand contact to substrate.

The protein belongs to the Orn/Lys/Arg decarboxylase class-II family. SpeA subfamily. The cofactor is Mg(2+). Requires pyridoxal 5'-phosphate as cofactor.

It carries out the reaction L-arginine + H(+) = agmatine + CO2. In terms of biological role, catalyzes the biosynthesis of agmatine from arginine. The polypeptide is Biosynthetic arginine decarboxylase (Pasteurella multocida (strain Pm70)).